The primary structure comprises 439 residues: MSHGEEKEPGIPQKVDSIDEIFVGCKSWVLKDGQDRLAEILSINSRRDPPKFYVHYEDFNKRLDEWITADRLQIDKEVIFPRPKELEEKKDSKKKKQQQNKSATPQAASATPDGGDVMDLDNLNVQGIPNEDISREDEIKKLRTSGSMTQNQNEVARVRNLNKVIMGKYEIEPWYFSPYPIELTDEDVVYIDDFSLQYFGSKKQYERYRKKCTLRHPPGNEIYRDDYVSFFEIDGRKQRTWCRNLCLLSKLFLDHKTLYYDVDPFLFYCMTRRDELGHHIVGYFSKEKESADAYNVACILTLPQYQRMGYGRLLIEFSYELSKKEGKVGSPEKPLSDLGLLSYRAYWADTLIKLLVEHGQEITIDEVSSISSMTTTDILHTAKALEILRFYRGQHVLYLNSDVMKRYKKLKNNKRRSIDPQKLIWTPPVFTASQLRFAW.

Residues 23 to 73 enclose the Tudor-knot domain; it reads VGCKSWVLKDGQDRLAEILSINSRRDPPKFYVHYEDFNKRLDEWITADRLQ. The disordered stretch occupies residues 83-120; it reads PKELEEKKDSKKKKQQQNKSATPQAASATPDGGDVMDL. The region spanning 156-427 is the MYST-type HAT domain; the sequence is ARVRNLNKVI…IDPQKLIWTP (272 aa). Residues 189 to 214 form a C2HC MYST-type; degenerate zinc finger; sequence VYIDDFSLQYFGSKKQYERYRKKCTL. The ESA1-RPD3 motif motif lies at 239–260; that stretch reads RTWCRNLCLLSKLFLDHKTLYY. Position 256 is an N6-acetyllysine; by autocatalysis (lysine 256). Acetyl-CoA contacts are provided by residues 297–301 and 306–312; these read ACILT and QRMGYGR. Glutamate 332 (proton donor/acceptor) is an active-site residue. An acetyl-CoA-binding site is contributed by serine 336.

Belongs to the MYST (SAS/MOZ) family. In terms of assembly, component of the NuA4 histone acetyltransferase complex. Post-translationally, autoacetylation at Lys-256 is required for proper function.

It is found in the nucleus. Its subcellular location is the chromosome. The catalysed reaction is L-lysyl-[histone] + acetyl-CoA = N(6)-acetyl-L-lysyl-[histone] + CoA + H(+). The enzyme catalyses L-lysyl-[protein] + acetyl-CoA = N(6)-acetyl-L-lysyl-[protein] + CoA + H(+). It carries out the reaction 2-hydroxyisobutanoyl-CoA + L-lysyl-[protein] = N(6)-(2-hydroxyisobutanoyl)-L-lysyl-[protein] + CoA + H(+). It catalyses the reaction (2E)-butenoyl-CoA + L-lysyl-[protein] = N(6)-(2E)-butenoyl-L-lysyl-[protein] + CoA + H(+). Catalytic component of the NuA4 histone acetyltransferase (HAT) complex which is involved in epigenetic transcriptional activation of selected genes principally by acetylation of nucleosomal histones H4, H3, H2B, H2A and H2A variant H2A.Z. Acetylates histone H4 to form H4K5ac, H4K8ac, H4K12ac and H4K16ac, histone H3 to form H3K14ac, and histone H2A to form H2AK4ac and H2AK7ac. The NuA4 complex is involved in the DNA damage response and is required for chromosome segregation. The NuA4 complex plays a direct role in repair of DNA double-strand breaks (DSBs) through homologous recombination. Recruitment to promoters depends on H3K4me. Also acetylates non-histone proteins. In addition to protein acetyltransferase, can use different acyl-CoA substrates, such as 2-hydroxyisobutanoyl-CoA (2-hydroxyisobutyryl-CoA) or (2E)-butenoyl-CoA (crotonyl-CoA), and is able to mediate protein 2-hydroxyisobutyrylation and crotonylation, respectively. The protein is Histone acetyltransferase ESA1 (ESA1) of Kluyveromyces lactis (strain ATCC 8585 / CBS 2359 / DSM 70799 / NBRC 1267 / NRRL Y-1140 / WM37) (Yeast).